We begin with the raw amino-acid sequence, 592 residues long: Cell division protein FtsZ (592 aa).

Residues G24–N28, G111–G113, E142, R146, and D190 contribute to the GTP site. The disordered stretch occupies residues K333–S362.

This sequence belongs to the FtsZ family. As to quaternary structure, homodimer. Polymerizes to form a dynamic ring structure in a strictly GTP-dependent manner. Interacts directly with several other division proteins.

The protein resides in the cytoplasm. Its function is as follows. Essential cell division protein that forms a contractile ring structure (Z ring) at the future cell division site. The regulation of the ring assembly controls the timing and the location of cell division. One of the functions of the FtsZ ring is to recruit other cell division proteins to the septum to produce a new cell wall between the dividing cells. Binds GTP and shows GTPase activity. The protein is Cell division protein FtsZ of Bartonella bacilliformis.